The primary structure comprises 260 residues: MLKFYDREFSSRLLIGTALYPSPKIMQDAIRAAGSQIVTVSLRRETAGGRTGDAFWSLIRELDVTVLPNTAGCKSVREAVTTAKLARELFGTSWIKLEVIADNDTLQPDVIGLVEAAAVLIKDGFKVFPYCTEDLGVAMRLVEVGCKVVMPWAAPIGSAKGIVNRDALRLLRERLPDITLVVDAGIGAPSHAAQACELGYDAVLLNTAVAKAADPVAMAGAFSLAVEAGRTAFEAGLMEARDFASPSTPVVGTPFWHAVS.

Lys96 functions as the Schiff-base intermediate with DXP in the catalytic mechanism. 1-deoxy-D-xylulose 5-phosphate-binding positions include Gly157, 184 to 185 (AG), and 206 to 207 (NT).

This sequence belongs to the ThiG family. As to quaternary structure, homotetramer. Forms heterodimers with either ThiH or ThiS.

The protein resides in the cytoplasm. It carries out the reaction [ThiS sulfur-carrier protein]-C-terminal-Gly-aminoethanethioate + 2-iminoacetate + 1-deoxy-D-xylulose 5-phosphate = [ThiS sulfur-carrier protein]-C-terminal Gly-Gly + 2-[(2R,5Z)-2-carboxy-4-methylthiazol-5(2H)-ylidene]ethyl phosphate + 2 H2O + H(+). It participates in cofactor biosynthesis; thiamine diphosphate biosynthesis. Catalyzes the rearrangement of 1-deoxy-D-xylulose 5-phosphate (DXP) to produce the thiazole phosphate moiety of thiamine. Sulfur is provided by the thiocarboxylate moiety of the carrier protein ThiS. In vitro, sulfur can be provided by H(2)S. This is Thiazole synthase from Nitrobacter hamburgensis (strain DSM 10229 / NCIMB 13809 / X14).